Here is a 437-residue protein sequence, read N- to C-terminus: UDP-N-acetylmuramate--L-alanine ligase (437 aa).

Residue 114-120 (GTHGKTS) participates in ATP binding.

It belongs to the MurCDEF family.

It localises to the cytoplasm. The catalysed reaction is UDP-N-acetyl-alpha-D-muramate + L-alanine + ATP = UDP-N-acetyl-alpha-D-muramoyl-L-alanine + ADP + phosphate + H(+). It functions in the pathway cell wall biogenesis; peptidoglycan biosynthesis. Cell wall formation. This chain is UDP-N-acetylmuramate--L-alanine ligase, found in Lactobacillus helveticus (strain DPC 4571).